Here is a 512-residue protein sequence, read N- to C-terminus: MRLNSTEISKLIKERIAQFEVFNQSYNEGSIISVSDGIIKINGLSNVMLGEMILLPNNEYAIALNIERDTVGAVVMGPYIHISEGAKVRCTGKILEVPVGDNFLGRVVNALGFPIDGKDSIQNDGFFPVEADAPGVIDRKSVNQPIQTGYKVIDSMIPIGRGQRELIIGDRQTGKTALAIDTIINQKQSGIKCIYVAIGQKLSTIINVVKKLEENNALFNTIIVVASASEAASLQYLAPYSGCAMAEFFRNKGEDSLIIYDDLSKHAVAYRQISLLLRRPPGREAFPGDIFYLHSRLLERASRVSMEYVQKITKNKITGKTGSITALPIIETQSGDVSAFVPTNVISITDGQIFLESNLFNSGIRPAVNPGISVSRVGSAAQTTIIKKLSSGIRTALAQYQELAAFSQFSSDLDDTTRKQLNHGQKITELLKQKQYSPISIAEQALILFVAENNFLDDISIDKITKFEKEILIYAHNYYFDLMEEINKTGDFNIVIKDKFIKLITEFKKNQF.

Glycine 169 to threonine 176 is a binding site for ATP.

Belongs to the ATPase alpha/beta chains family. In terms of assembly, F-type ATPases have 2 components, CF(1) - the catalytic core - and CF(0) - the membrane proton channel. CF(1) has five subunits: alpha(3), beta(3), gamma(1), delta(1), epsilon(1). CF(0) has three main subunits: a(1), b(2) and c(9-12). The alpha and beta chains form an alternating ring which encloses part of the gamma chain. CF(1) is attached to CF(0) by a central stalk formed by the gamma and epsilon chains, while a peripheral stalk is formed by the delta and b chains.

Its subcellular location is the cell membrane. It catalyses the reaction ATP + H2O + 4 H(+)(in) = ADP + phosphate + 5 H(+)(out). Functionally, produces ATP from ADP in the presence of a proton gradient across the membrane. The alpha chain is a regulatory subunit. This chain is ATP synthase subunit alpha, found in Buchnera aphidicola subsp. Acyrthosiphon pisum (strain 5A).